The chain runs to 242 residues: Small ribosomal subunit protein uS2 (242 aa).

It belongs to the universal ribosomal protein uS2 family.

This is Small ribosomal subunit protein uS2 from Shouchella clausii (strain KSM-K16) (Alkalihalobacillus clausii).